Consider the following 329-residue polypeptide: Stimulator of interferon genes protein (329 aa).

At Met1 to Val4 the chain is on the cytoplasmic side. Residues Leu5–Gln25 traverse the membrane as a helical segment. A topological domain (lumenal) is located at residue Leu26. A helical membrane pass occupies residues Ile27 to Glu52. Residues Ile53–Leu74 lie on the Cytoplasmic side of the membrane. Residues Ser75 to Phe88 form a helical membrane-spanning segment. The Lumenal portion of the chain corresponds to Tyr89–Pro98. A helical membrane pass occupies residues Leu99–Leu116. Topologically, residues Gly117 to Leu329 are cytoplasmic. A cyclic dinucleotide-binding domain (CBD) region spans residues Leu135 to Glu325. Positions 144, 149, 220, and 245 each coordinate 2',3'-cGAMP. 3',3'-c-di-GMP contacts are provided by residues Ser144, Tyr149, Arg220–Lys223, and Thr245.

The protein belongs to the STING family. As to quaternary structure, homodimer; forms a homodimer in absence of cyclic nucleotide (c-di-GMP or cGAMP). Homotetramer; in presence of cyclic nucleotide (c-di-GMP or cGAMP), forms tetramers and higher-order oligomers through side-by-side packing.

It is found in the endoplasmic reticulum membrane. Its subcellular location is the cytoplasm. The protein resides in the perinuclear region. It localises to the endoplasmic reticulum-Golgi intermediate compartment membrane. The protein localises to the golgi apparatus membrane. It is found in the cytoplasmic vesicle. Its subcellular location is the autophagosome membrane. It catalyses the reaction H(+)(in) = H(+)(out). Its function is as follows. Sensor of cytosolic DNA from bacteria and viruses that promotes autophagy. Acts by recognizing and binding cyclic GMP-AMP (cGAMP), a messenger produced by CGAS in response to DNA in the cytosol. Exhibits guanine base-specific ligand recognition: binds 3'-3'linked cGAMP, 2'-3' linked cGAMP and 3'-3' linked c-di-GMP with much greater affinity as compared to 3'-3' linked c-di-AMP. Following cGAMP-binding, promotes the formation of autophagosomes, leading to target cytosolic DNA for degradation by the lysosome. Promotes autophagy by acting as a proton channel that directs proton efflux from the Golgi to facilitate LC3 lipidation. Lacks the C-terminal tail (CTT) found in other vertebrate orthologs which is essential for interferon signaling. The protein is Stimulator of interferon genes protein of Xenopus tropicalis (Western clawed frog).